The following is a 762-amino-acid chain: Transcription factor kpeA (762 aa).

Positions 267-361 (FDHTSHGSQS…PLKPDQRKQA (95 aa)) are disordered. Low complexity predominate over residues 294–312 (KKPSSPTRSTGSSSSTSPP). The segment at residues 370–401 (CLRCKFLKKTCDKGEPCAGCQPSHARLWQVPC) is a DNA-binding region (zn(2)-C6 fungal-type).

The protein localises to the nucleus. Functionally, transcription factor that regulates conidiation as well as kojic acid production, likely by negatively controlling kojR and kojA expression. The chain is Transcription factor kpeA from Aspergillus oryzae (strain ATCC 42149 / RIB 40) (Yellow koji mold).